The chain runs to 233 residues: Coproporphyrinogen-III oxidase 2, chloroplastic (233 aa).

Residues 1–48 (MASHSSTLFTSPSSFILFSSHRLKSSPNYFTYHFPRSVKRPHFDLRCS) constitute a chloroplast transit peptide. Ser-174 contacts substrate. His-188 serves as the catalytic Proton donor.

It belongs to the aerobic coproporphyrinogen-III oxidase family. Homodimer.

The protein resides in the plastid. Its subcellular location is the chloroplast. The enzyme catalyses coproporphyrinogen III + O2 + 2 H(+) = protoporphyrinogen IX + 2 CO2 + 2 H2O. It functions in the pathway porphyrin-containing compound metabolism; protoporphyrin-IX biosynthesis; protoporphyrinogen-IX from coproporphyrinogen-III (O2 route): step 1/1. The protein operates within porphyrin-containing compound metabolism; chlorophyll biosynthesis. Key enzyme in heme biosynthesis. Catalyzes the oxidative decarboxylation of propionic acid side chains of rings A and B of coproporphyrinogen III. This Arabidopsis thaliana (Mouse-ear cress) protein is Coproporphyrinogen-III oxidase 2, chloroplastic (CPX2).